The chain runs to 461 residues: Argininosuccinate lyase (461 aa).

The protein belongs to the lyase 1 family. Argininosuccinate lyase subfamily.

It localises to the cytoplasm. It catalyses the reaction 2-(N(omega)-L-arginino)succinate = fumarate + L-arginine. The protein operates within amino-acid biosynthesis; L-arginine biosynthesis; L-arginine from L-ornithine and carbamoyl phosphate: step 3/3. This Clostridium beijerinckii (strain ATCC 51743 / NCIMB 8052) (Clostridium acetobutylicum) protein is Argininosuccinate lyase.